Consider the following 279-residue polypeptide: Aquaporin A (279 aa).

Residues 1–40 (MVKVVPLRFITYDPLKDPSKMIYRRPISKPVKAFKGFFSE) lie on the Cytoplasmic side of the membrane. The chain crosses the membrane as a helical span at residues 41–61 (FLGTLYLVYFCGGSVCAAFAV). Over 62 to 69 (AGDSAARA) the chain is Extracellular. Residues 70 to 90 (LLGGLIQGMALAALIWAVSGV) traverse the membrane as a helical segment. The Cytoplasmic portion of the chain corresponds to 91–114 (SGCNLNPAVTLANLLSGRVGLIDS). The NPA 1 signature appears at 96-98 (NPA). Residues 115–135 (LYYVAAQILGCIAGAGILYGC) traverse the membrane as a helical segment. Over 136–158 (LPNMYRIDLGVPHLAPGMNTGQA) the chain is Extracellular. Residues 159–179 (FLMEMMLTSILCLCVLGTSVF) traverse the membrane as a helical segment. The Cytoplasmic segment spans residues 180–188 (NVWDRRLNR). Residues 189 to 209 (IAPFAIGLALFIGVAIGFNFS) form a helical membrane-spanning segment. Residues 210-227 (GGALNPVRVLGPSIISGV) lie on the Extracellular side of the membrane. The NPA 2 signature appears at 214-216 (NPV). The chain crosses the membrane as a helical span at residues 228–248 (WSHHWVYWLGPIVGAILAAFI). At 249–279 (YRCLLQERFDVIERPGYIAPLIDPSTAVSSY) the chain is on the cytoplasmic side.

The protein belongs to the MIP/aquaporin (TC 1.A.8) family.

Its subcellular location is the cell membrane. Its function is as follows. May form a water-specific channel. Required for prolonged spore survival on fruiting bodies. The protein is Aquaporin A (aqpA) of Dictyostelium discoideum (Social amoeba).